The chain runs to 283 residues: MILKDLLIEGYGVLKKASIGSYQIDAQLLLGKVLKKDRLFILTNPDYHIKEEEKEKYFQLIDLRKNKMPIKYILGTTEFMGLNFNIKKGVLIPRPDTEILVETVLEEIKNKNYKQICDVCCGSGIIGITIGYTLNNTEIICYDIEDIPYNTTKENILKHNLQDRVKALKSDLLTEAIKEKRRFDLIVSNPPYIREDVIETLMDDVKKYEPFEALCGGKDGLFFYEGIIKQSLEVLNDGGTIAFEIGYDQKIQVSHILNEYGFKDVLCIKDLAGKDRVIKARKY.

Asp-143 and Asn-189 together coordinate S-adenosyl-L-methionine. Residue Asn-189–Tyr-192 coordinates substrate.

This sequence belongs to the protein N5-glutamine methyltransferase family. PrmC subfamily.

The catalysed reaction is L-glutaminyl-[peptide chain release factor] + S-adenosyl-L-methionine = N(5)-methyl-L-glutaminyl-[peptide chain release factor] + S-adenosyl-L-homocysteine + H(+). Methylates the class 1 translation termination release factors RF1/PrfA and RF2/PrfB on the glutamine residue of the universally conserved GGQ motif. In Clostridium botulinum (strain Hall / ATCC 3502 / NCTC 13319 / Type A), this protein is Release factor glutamine methyltransferase.